The following is a 185-amino-acid chain: Transcription termination/antitermination protein NusG (185 aa).

Residues 134–162 (PGQMVRVIDGPFNDFDGLVEEVNYEKNRL) form the KOW domain.

Belongs to the NusG family.

Its function is as follows. Participates in transcription elongation, termination and antitermination. The sequence is that of Transcription termination/antitermination protein NusG from Xylella fastidiosa (strain Temecula1 / ATCC 700964).